Here is a 405-residue protein sequence, read N- to C-terminus: Scramblase ANY1 (405 aa).

Over 1–51 the chain is Cytoplasmic; that stretch reads MSTTGPLDATLIRDVAVATATKASYDMSDTLYSYLPKVDQFYIPEWLTMQF. The helical transmembrane segment at 52–72 threads the bilayer; the sequence is IANNLISFTPLFSYGTTIISI. The Lumenal portion of the chain corresponds to 73 to 76; sequence EKCK. A helical transmembrane segment spans residues 77-97; the sequence is TALGFSIDICATMLIASILRI. The Cytoplasmic segment spans residues 98–103; it reads SYYLIT. A helical membrane pass occupies residues 104–124; it reads PYEITLLRQSLVMIFIQLILL. Residues 125–177 lie on the Lumenal side of the membrane; that stretch reads RTSLKYRPDEYKYQNLTDVESLSHLIHDIWFEFFSCINRPKFLSEDWKNLIKS. Residues 178–198 traverse the membrane as a helical segment; sequence LSFTNLLKFSFKIFLAFFYKI. Topologically, residues 199-223 are cytoplasmic; the sequence is LKFFDPNFKRIGAFWQWDDDKNFWR. Residues 224-244 traverse the membrane as a helical segment; the sequence is FLALFATVQILVTFFISNILN. Residues 245–254 are Lumenal-facing; the sequence is WDSLAQGLGS. The 58-residue stretch at 252–309 folds into the PQ-loop domain; that stretch reads LGSIIGSLGLLVESLLPLPQIAILYKLKSVQGFKLILLVSWLCGDTLKITYLIFGAKN. Residues 255 to 275 traverse the membrane as a helical segment; that stretch reads IIGSLGLLVESLLPLPQIAIL. Residues 276–283 are Cytoplasmic-facing; it reads YKLKSVQG. A helical membrane pass occupies residues 284–306; sequence FKLILLVSWLCGDTLKITYLIFG. Residues 307-312 lie on the Lumenal side of the membrane; it reads AKNISA. Residues 313–335 traverse the membrane as a helical segment; the sequence is LFVIFALFQMSLDFYIGGQYIYY. Residues 336 to 405 are Cytoplasmic-facing; it reads RYYYPKLRHQ…GKSQAQAVTL (70 aa). Residues 379–405 are disordered; the sequence is LKQDSNDTSDSPQDDQVGKSQAQAVTL. The segment covering 396–405 has biased composition (polar residues); that stretch reads GKSQAQAVTL.

As to quaternary structure, interacts with NEO1.

It localises to the golgi apparatus membrane. The protein localises to the late endosome membrane. Functionally, phospholipid scramblase that transports phosphatidylserine (PS) and phosphatidylethalonamine (PE) bidirectionally from one leaflet to the other of the phospholipid bilayer to at least partially collapse the membrane asymmetry established by NEO1 and other flippases. The PS scramblase activity has been disputed. Functions in the trafficking pathway from endosomes to the trans-Golgi network (TGN). This chain is Scramblase ANY1, found in Saccharomyces cerevisiae (strain ATCC 204508 / S288c) (Baker's yeast).